Consider the following 210-residue polypeptide: LexA repressor (210 aa).

Positions 30-50 form a DNA-binding region, H-T-H motif; sequence RVEIAREIGFKSPNAAEEHLK. Active-site for autocatalytic cleavage activity residues include serine 127 and lysine 164.

It belongs to the peptidase S24 family. In terms of assembly, homodimer.

The catalysed reaction is Hydrolysis of Ala-|-Gly bond in repressor LexA.. In terms of biological role, represses a number of genes involved in the response to DNA damage (SOS response), including recA and lexA. In the presence of single-stranded DNA, RecA interacts with LexA causing an autocatalytic cleavage which disrupts the DNA-binding part of LexA, leading to derepression of the SOS regulon and eventually DNA repair. The sequence is that of LexA repressor from Actinobacillus pleuropneumoniae serotype 5b (strain L20).